The chain runs to 522 residues: E3 ubiquitin-protein ligase DMA2 (522 aa).

Disordered regions lie at residues 1–56 (MYTP…RPAS) and 69–92 (QNSQTASSSAAPDQRLFGTTPSNS). Positions 14-35 (APTSSMTSNSSSASNANTTSSS) are enriched in low complexity. Polar residues predominate over residues 36–49 (GINPRNRASGTPSN). Position 206 is a phosphoserine (S206). Residues K211, K256, K258, K288, K310, K333, K343, K346, K366, K406, K412, and K423 each participate in a glycyl lysine isopeptide (Lys-Gly) (interchain with G-Cter in ubiquitin) cross-link. Positions 295 to 358 (LVIGRYTERV…SGTFLNHQRL (64 aa)) constitute an FHA domain. Residues 433–477 (CSICLCKIKPCQAIFISPCAHSWHFRCVRRLVMLSYPQFVCPNCR) form an RING-type; atypical zinc finger.

It belongs to the DMA1 family. UBC4-dependent autoubiquitination occurs at Lys-211, Lys-258, Lys-288, Lys-310, Lys-333, Lys-343, Lys-346, Lys-366, Lys-406, Lys-412 and Lys-423. UBC13/MMS2-dependent autoubiquitination occurs at Lys-258, Lys-310, Lys-346 and Lys-366. Lys-211, Lys-256, Lys-288, Lys-310, Lys-343, Lys-258, Lys-366 and Lys-412 are also ubiquitinated in trans by DMA1 E3 ligase in association with UBC4.

The protein localises to the cytoplasm. The enzyme catalyses S-ubiquitinyl-[E2 ubiquitin-conjugating enzyme]-L-cysteine + [acceptor protein]-L-lysine = [E2 ubiquitin-conjugating enzyme]-L-cysteine + N(6)-ubiquitinyl-[acceptor protein]-L-lysine.. Its function is as follows. E3 ubiquitin-protein ligase which functions in cell cycle retarding in conjunction with the UBC4 and UBC13/MMS2 complex, 2 E2 ubiquitin conjugating enzymes. Involved in nutritional control of the cell cycle. Required for proper spindle positioning, likely regulating septin ring deposition at the bud neck. In Saccharomyces cerevisiae (strain YJM789) (Baker's yeast), this protein is E3 ubiquitin-protein ligase DMA2 (DMA2).